Here is a 158-residue protein sequence, read N- to C-terminus: Transcription elongation factor GreA (158 aa).

The stretch at 5 to 75 (EKLPMLAEGY…DLEDRVSRAQ (71 aa)) forms a coiled coil.

Belongs to the GreA/GreB family.

Necessary for efficient RNA polymerase transcription elongation past template-encoded arresting sites. The arresting sites in DNA have the property of trapping a certain fraction of elongating RNA polymerases that pass through, resulting in locked ternary complexes. Cleavage of the nascent transcript by cleavage factors such as GreA or GreB allows the resumption of elongation from the new 3'terminus. GreA releases sequences of 2 to 3 nucleotides. This Novosphingobium aromaticivorans (strain ATCC 700278 / DSM 12444 / CCUG 56034 / CIP 105152 / NBRC 16084 / F199) protein is Transcription elongation factor GreA.